Here is a 186-residue protein sequence, read N- to C-terminus: ATP synthase subunit b, chloroplastic (186 aa).

A helical transmembrane segment spans residues 27–49 (LATNPINLSVVLGVLIFFGKGVL).

It belongs to the ATPase B chain family. F-type ATPases have 2 components, F(1) - the catalytic core - and F(0) - the membrane proton channel. F(1) has five subunits: alpha(3), beta(3), gamma(1), delta(1), epsilon(1). F(0) has four main subunits: a(1), b(1), b'(1) and c(10-14). The alpha and beta chains form an alternating ring which encloses part of the gamma chain. F(1) is attached to F(0) by a central stalk formed by the gamma and epsilon chains, while a peripheral stalk is formed by the delta, b and b' chains.

It localises to the plastid. Its subcellular location is the chloroplast thylakoid membrane. Functionally, f(1)F(0) ATP synthase produces ATP from ADP in the presence of a proton or sodium gradient. F-type ATPases consist of two structural domains, F(1) containing the extramembraneous catalytic core and F(0) containing the membrane proton channel, linked together by a central stalk and a peripheral stalk. During catalysis, ATP synthesis in the catalytic domain of F(1) is coupled via a rotary mechanism of the central stalk subunits to proton translocation. Its function is as follows. Component of the F(0) channel, it forms part of the peripheral stalk, linking F(1) to F(0). This Illicium oligandrum (Star anise) protein is ATP synthase subunit b, chloroplastic.